Consider the following 189-residue polypeptide: Thermostable direct hemolysin-related (189 aa).

Positions 1–24 (MKYRYFAKKSFLFISMLAAFKTFA) are cleaved as a signal peptide. Cys-175 and Cys-185 are disulfide-bonded.

This sequence belongs to the TDH hemolysin family. In terms of assembly, homodimer.

Functionally, bacterial hemolysins are exotoxins that attack blood cell membranes and cause cell rupture by mechanisms not clearly defined. The protein is Thermostable direct hemolysin-related (tdh3) of Vibrio parahaemolyticus.